The primary structure comprises 353 residues: Purine nucleoside phosphorylase (353 aa).

Over residues methionine 1–glycine 16 the composition is skewed to polar residues. Positions methionine 1–alanine 42 are disordered. Phosphate contacts are provided by residues serine 98, histidine 129, arginine 149–histidine 151, and alanine 181. Glutamate 266 is a binding site for a purine D-ribonucleoside. Serine 285 lines the phosphate pocket. Asparagine 308 contributes to the a purine D-ribonucleoside binding site.

Belongs to the PNP/MTAP phosphorylase family. In terms of assembly, homotrimer.

The enzyme catalyses inosine + phosphate = alpha-D-ribose 1-phosphate + hypoxanthine. The catalysed reaction is guanosine + phosphate = alpha-D-ribose 1-phosphate + guanine. It carries out the reaction 2'-deoxyguanosine + phosphate = 2-deoxy-alpha-D-ribose 1-phosphate + guanine. It catalyses the reaction 2'-deoxyinosine + phosphate = 2-deoxy-alpha-D-ribose 1-phosphate + hypoxanthine. It participates in purine metabolism; purine nucleoside salvage. With respect to regulation, inhibited by 5'-deaza-1'-aza-2c-deoxy-1'-(9-methylene) immucillin-H (DADMe-ImmH). In terms of biological role, as part of the purine salvage pathway, catalyzes the phosphorolytic breakdown of the N-glycosidic bond in the beta-(deoxy)ribonucleoside molecules, with the formation of the corresponding free purine bases and pentose-1-phosphate. Preferentially acts on 2'-deoxyinosine and inosine, and to a lesser extent on 2'-deoxyguanosine and guanosine. Has no activity towards adenosine or 2'-deoxyadenosine. This Anopheles gambiae (African malaria mosquito) protein is Purine nucleoside phosphorylase.